We begin with the raw amino-acid sequence, 396 residues long: Flavohemoprotein (396 aa).

Positions 1–136 (MLDAQTIATV…LANVFINREA (136 aa)) constitute a Globin domain. Histidine 85 is a heme b binding site. Residues tyrosine 95 and glutamate 135 each act as charge relay system in the active site. The tract at residues 147 to 396 (GGWEGTRDFR…YECFGPHKVL (250 aa)) is reductase. The region spanning 150 to 255 (EGTRDFRIVA…VAPAGDFFMA (106 aa)) is the FAD-binding FR-type domain. Residues tyrosine 188 and 204 to 207 (RQYS) contribute to the FAD site. 268–273 (GVGQTP) serves as a coordination point for NADP(+). 389–392 (CFGP) contributes to the FAD binding site.

It belongs to the globin family. Two-domain flavohemoproteins subfamily. The protein in the C-terminal section; belongs to the flavoprotein pyridine nucleotide cytochrome reductase family. Monomer. Requires FAD as cofactor. The cofactor is heme b.

The protein resides in the cytoplasm. It carries out the reaction 2 nitric oxide + NADPH + 2 O2 = 2 nitrate + NADP(+) + H(+). The enzyme catalyses 2 nitric oxide + NADH + 2 O2 = 2 nitrate + NAD(+) + H(+). Its function is as follows. Is involved in NO detoxification in an aerobic process, termed nitric oxide dioxygenase (NOD) reaction that utilizes O(2) and NAD(P)H to convert NO to nitrate, which protects the bacterium from various noxious nitrogen compounds. Therefore, plays a central role in the inducible response to nitrosative stress. In the presence of oxygen and NADH, HMP has NADH oxidase activity, which leads to the generation of superoxide and H(2)O(2), both in vitro and in vivo, and it has been suggested that HMP might act as an amplifier of superoxide stress. Under anaerobic conditions, HMP also exhibits nitric oxide reductase and FAD reductase activities. However, all these reactions are much lower than NOD activity. Functionally, various electron acceptors are also reduced by HMP in vitro, including dihydropterine, ferrisiderophores, ferric citrate, cytochrome c, nitrite, S-nitrosoglutathione, and alkylhydroperoxides. However, it is unknown if these reactions are of any biological significance in vivo. This is Flavohemoprotein (hmp) from Escherichia coli (strain K12).